Reading from the N-terminus, the 94-residue chain is Large ribosomal subunit protein bL27 (94 aa).

The propeptide occupies 1–9 (MTLNNLQLF). A disordered region spans residues 9–33 (FAHKKGGGSTSNGRDSQAKRLGAKA).

This sequence belongs to the bacterial ribosomal protein bL27 family. In terms of processing, the N-terminus is cleaved by ribosomal processing cysteine protease Prp.

This is Large ribosomal subunit protein bL27 from Streptococcus pneumoniae serotype 4 (strain ATCC BAA-334 / TIGR4).